A 198-amino-acid chain; its full sequence is Glycerol-3-phosphate acyltransferase (198 aa).

5 helical membrane-spanning segments follow: residues 6 to 26 (FLPV…GLVL), 56 to 78 (LAAG…AGYI), 83 to 101 (AAMA…PVWL), 113 to 133 (IGIL…LWLA), and 155 to 175 (FLWW…TLLL).

It belongs to the PlsY family. As to quaternary structure, probably interacts with PlsX.

It is found in the cell inner membrane. The enzyme catalyses an acyl phosphate + sn-glycerol 3-phosphate = a 1-acyl-sn-glycero-3-phosphate + phosphate. Its pathway is lipid metabolism; phospholipid metabolism. Catalyzes the transfer of an acyl group from acyl-phosphate (acyl-PO(4)) to glycerol-3-phosphate (G3P) to form lysophosphatidic acid (LPA). This enzyme utilizes acyl-phosphate as fatty acyl donor, but not acyl-CoA or acyl-ACP. The polypeptide is Glycerol-3-phosphate acyltransferase (Bradyrhizobium diazoefficiens (strain JCM 10833 / BCRC 13528 / IAM 13628 / NBRC 14792 / USDA 110)).